Reading from the N-terminus, the 470-residue chain is Cysteine--tRNA ligase (470 aa).

Cysteine 28 serves as a coordination point for Zn(2+). The short motif at 30 to 40 (PTVYNYIHIGN) is the 'HIGH' region element. The Zn(2+) site is built by cysteine 211, histidine 236, and glutamate 240. Positions 270 to 274 (KMSKS) match the 'KMSKS' region motif. Lysine 273 lines the ATP pocket.

The protein belongs to the class-I aminoacyl-tRNA synthetase family. In terms of assembly, monomer. Zn(2+) serves as cofactor.

The protein resides in the cytoplasm. It carries out the reaction tRNA(Cys) + L-cysteine + ATP = L-cysteinyl-tRNA(Cys) + AMP + diphosphate. The polypeptide is Cysteine--tRNA ligase (Enterococcus faecalis (strain ATCC 700802 / V583)).